A 461-amino-acid polypeptide reads, in one-letter code: Argininosuccinate lyase (461 aa).

It belongs to the lyase 1 family. Argininosuccinate lyase subfamily.

It is found in the cytoplasm. It carries out the reaction 2-(N(omega)-L-arginino)succinate = fumarate + L-arginine. Its pathway is amino-acid biosynthesis; L-arginine biosynthesis; L-arginine from L-ornithine and carbamoyl phosphate: step 3/3. This is Argininosuccinate lyase from Limosilactobacillus reuteri subsp. reuteri (strain JCM 1112) (Lactobacillus reuteri).